Reading from the N-terminus, the 94-residue chain is Small polypeptide ROTUNDIFOLIA LIKE 1 (94 aa).

The segment covering 1 to 13 (MRQCASASSSTSR) has biased composition (polar residues). A disordered region spans residues 1 to 26 (MRQCASASSSTSRPPEAAGEEGKRRR). The interval 28–59 (RRGWLLQAAAREQRSRFYIFRRCVAMLLCWYK) is required for DVL/RTFL small polypeptide activity. A helical transmembrane segment spans residues 63–82 (ITPYNVVPLGIYGLVWFATM).

It belongs to the DVL/RTFL small polypeptides family.

It is found in the cell membrane. Small polypeptide acting as a regulatory molecule which coordinates cellular responses required for differentiation, growth and development, probably by restricting polar cell proliferation in lateral organs. In Oryza sativa subsp. japonica (Rice), this protein is Small polypeptide ROTUNDIFOLIA LIKE 1.